The following is a 579-amino-acid chain: Mitogen-activated protein kinase kinase kinase 7 (579 aa).

The segment at 1–300 is interaction with MAPK8IP1; the sequence is MSTASAASSS…FPGADEPLQY (300 aa). A Protein kinase domain is found at 36–291; it reads IEVEEVVGRG…KIMTHLMRYF (256 aa). ATP-binding positions include 42-50 and K63; that span reads VGRGAFGVV. K72 is covalently cross-linked (Glycyl lysine isopeptide (Lys-Gly) (interchain with G-Cter in ubiquitin)). Catalysis depends on D156, which acts as the Proton acceptor. A Glycyl lysine isopeptide (Lys-Gly) (interchain with G-Cter in ubiquitin) cross-link involves residue K158. Phosphothreonine; by autocatalysis occurs at positions 184 and 187. S192 carries the post-translational modification Phosphoserine; by autocatalysis. A Glycyl lysine isopeptide (Lys-Gly) (interchain with G-Cter in ubiquitin) cross-link involves residue K209. Disordered stretches follow at residues 301-339 and 354-391; these read PCQY…EQVP and KNQA…MSAD. A compositionally biased stretch (polar residues) spans 306–322; the sequence is DEGQSNSATSTGSFMDI. 2 stretches are compositionally biased toward low complexity: residues 323–334 and 361–375; these read TSTNTSNKSDTN and SESG…RGSS. S367, S389, and S412 each carry phosphoserine. Polar residues predominate over residues 416–425; that stretch reads LTVTGTDPGQ. Residues 416–466 form a disordered region; the sequence is LTVTGTDPGQVSSRSSSPSVRMITTSGPTSEKPARSHPWTPDDSTDTNGSD. The span at 426 to 436 shows a compositional bias: low complexity; the sequence is VSSRSSSPSVR. S428 is modified (phosphoserine).

The protein belongs to the protein kinase superfamily. STE Ser/Thr protein kinase family. MAP kinase kinase kinase subfamily. In terms of assembly, can form homodimer. Binds both upstream activators and downstream substrates in multimolecular complexes. Interacts with TAB1/MAP3K7IP1, TAB2/MAP3K7IP2 and TAB3/MAP3K7IP3. Identified in the TRIKA2 complex composed of MAP3K7/TAK1, TAB1/MAP3K7IP1 and TAB2/MAP3K7IP2. Interacts with PPM1L and PPM1B/PP2CB. Interaction with PP2A and PPP6C leads to its repressed activity. Interacts with TRAF6 and TAB1/MAP3K7IP1; during IL-1 signaling. Interacts with TAOK1 and TAOK2; interaction with TAOK2 interferes with MAP3K7 interaction with IKKA, thus preventing NF-kappa-B activation. Interacts with DYNC2I2 (via WD domains). Interacts with CYLD and RBCK1. Interacts with TGFBR1; induces MAP3K7/TAK1 activation by TRAF6. Interacts with MAPK8IP1 and SMAD6. Interacts with isoform 1 of VRK2. Interacts with DAB2; the interaction is induced by TGF-beta stimulation and may mediate TGF-beta stimulated JNK activation. Interacts with TRIM5. Part of a complex containing ITCH, NDFIP1 and MAP3K7. Interacts with IFIT5; the interaction synergizes the recruitment of IKK to MAP3K7 and enhances IKK phosphorylation. Interacts with PLEKHM1 (via N- and C-terminus). Found in a complex with SH3RF1, RAC2, MAP2K7/MKK7, MAPK8IP1/JIP1, MAPK8/JNK1 and MAPK9/JNK2. Interacts with SASH1. Interacts with RIPK1. Requires Mg(2+) as cofactor. In terms of processing, association with TAB1/MAP3K7IP1 promotes autophosphorylation at Ser-192 and subsequent activation. Association with TAB2/MAP3K7IP2, itself associated with free unanchored Lys-63 polyubiquitin chain, promotes autophosphorylation and subsequent activation of MAP3K7. Dephosphorylation at Ser-192 by PPM1B/PP2CB and at Thr-187 by PP2A and PPP6C leads to inactivation. Post-translationally, 'Lys-48'-linked polyubiquitination at Lys-72 is induced by TNFalpha, and leads to proteasomal degradation. Undergoes 'Lys-48'-linked polyubiquitination catalyzed by ITCH. 'Lys-63'-linked polyubiquitination at Lys-158 by TRIM8 does not lead to proteasomal degradation but contributes to autophosphorylation and activation. Deubiquitinated by CYLD, a protease that selectively cleaves 'Lys-63'-linked ubiquitin chains. Deubiquitinated by USP19; leading to negative regulation of TNF-alpha- and IL-1beta-triggered NF-kappa-B activation.

It localises to the cytoplasm. The protein resides in the cell membrane. It catalyses the reaction L-seryl-[protein] + ATP = O-phospho-L-seryl-[protein] + ADP + H(+). It carries out the reaction L-threonyl-[protein] + ATP = O-phospho-L-threonyl-[protein] + ADP + H(+). Its activity is regulated as follows. Activated by pro-inflammatory cytokines and in response to physical and chemical stresses, including osmotic stress, oxidative stress, arsenic and ultraviolet light irradiation. Activated by 'Lys-63'-linked polyubiquitination and by autophosphorylation. Association with TAB1/MAP3K7IP1 and TAB2/MAP3K7IP2 promotes activation through autophosphorylation, whereas PPM1B/PP2CB, PP2A and PPP6C dephosphorylation leads to inactivation. Ceramides are also able to activate MAP3K7/TAK1. Serine/threonine kinase which acts as an essential component of the MAP kinase signal transduction pathway. Plays an important role in the cascades of cellular responses evoked by changes in the environment. Mediates signal transduction of TRAF6, various cytokines including interleukin-1 (IL-1), transforming growth factor-beta (TGFB), TGFB-related factors like BMP2 and BMP4, toll-like receptors (TLR), tumor necrosis factor receptor CD40 and B-cell receptor (BCR). Once activated, acts as an upstream activator of the MKK/JNK signal transduction cascade and the p38 MAPK signal transduction cascade through the phosphorylation and activation of several MAP kinase kinases like MAP2K1/MEK1, MAP2K3/MKK3, MAP2K6/MKK6 and MAP2K7/MKK7. These MAP2Ks in turn activate p38 MAPKs and c-jun N-terminal kinases (JNKs); both p38 MAPK and JNK pathways control the transcription factors activator protein-1 (AP-1). Independently of MAP2Ks and p38 MAPKs, acts as a key activator of NF-kappa-B by promoting activation of the I-kappa-B-kinase (IKK) core complex. Mechanistically, recruited to polyubiquitin chains of RIPK2 and IKBKG/NEMO via TAB2/MAP3K7IP2 and TAB3/MAP3K7IP3, and catalyzes phosphorylation and activation of IKBKB/IKKB component of the IKK complex, leading to NF-kappa-B activation. In osmotic stress signaling, plays a major role in the activation of MAPK8/JNK1, but not that of NF-kappa-B. Promotes TRIM5 capsid-specific restriction activity. Phosphorylates RIPK1 at 'Ser-321' which positively regulates RIPK1 interaction with RIPK3 to promote necroptosis but negatively regulates RIPK1 kinase activity and its interaction with FADD to mediate apoptosis. Phosphorylates STING1 in response to cGAMP-activation, promoting association between STEEP1 and STING1 and STING1 translocation to COPII vesicles. The polypeptide is Mitogen-activated protein kinase kinase kinase 7 (MAP3K7) (Bos taurus (Bovine)).